We begin with the raw amino-acid sequence, 93 residues long: Alpha-defensin 13 (93 aa).

Residues 1 to 19 (MKTLVLLSALVLLAFQVQA) form the signal peptide. Positions 20 to 58 (DPIQNTDEETKTEEQPGEEDQAVSVSFGDPEGTSLQEES) are excised as a propeptide. The segment at 22–54 (IQNTDEETKTEEQPGEEDQAVSVSFGDPEGTSL) is disordered. 3 disulfide bridges follow: Cys64–Cys92, Cys66–Cys81, and Cys71–Cys91.

The protein belongs to the alpha-defensin family. As to expression, paneth cells of the small bowel.

The protein resides in the secreted. Functionally, probably contributes to the antimicrobial barrier function of the small bowel mucosa. This chain is Alpha-defensin 13 (Defa13), found in Mus musculus (Mouse).